The sequence spans 250 residues: Ubiquinone/menaquinone biosynthesis C-methyltransferase UbiE (250 aa).

Residues threonine 73, aspartate 94, 122-123 (NA), and serine 139 each bind S-adenosyl-L-methionine.

The protein belongs to the class I-like SAM-binding methyltransferase superfamily. MenG/UbiE family.

It carries out the reaction a 2-demethylmenaquinol + S-adenosyl-L-methionine = a menaquinol + S-adenosyl-L-homocysteine + H(+). The catalysed reaction is a 2-methoxy-6-(all-trans-polyprenyl)benzene-1,4-diol + S-adenosyl-L-methionine = a 5-methoxy-2-methyl-3-(all-trans-polyprenyl)benzene-1,4-diol + S-adenosyl-L-homocysteine + H(+). Its pathway is quinol/quinone metabolism; menaquinone biosynthesis; menaquinol from 1,4-dihydroxy-2-naphthoate: step 2/2. The protein operates within cofactor biosynthesis; ubiquinone biosynthesis. Functionally, methyltransferase required for the conversion of demethylmenaquinol (DMKH2) to menaquinol (MKH2) and the conversion of 2-polyprenyl-6-methoxy-1,4-benzoquinol (DDMQH2) to 2-polyprenyl-3-methyl-6-methoxy-1,4-benzoquinol (DMQH2). In Francisella tularensis subsp. novicida (strain U112), this protein is Ubiquinone/menaquinone biosynthesis C-methyltransferase UbiE.